We begin with the raw amino-acid sequence, 361 residues long: MIPKEEIMGIFEKYNKDEVTIVTVGSHTSLHILKGAKLEGFSTAVITTKDRAIPYKRFGVADKFIYVDQFSDISKEEIQQQLRDMNAIIVPHGSFIAYCGLDNVEDSFKVPMFGNRAILRWEAERDLEGQLLGESGLRIPKKYGGPDDIDGPVMVKFPGARGGRGYFPCSTVEEFWRKIAEFKAKGILTEDDVKKAHIEEYVVGANYCIHYFYSPLKDQVELMGIDRRYESSIDGLVRVPAKDQLELNVDPSYVITGNFPVVIRESLLPQVFDIGDKLSAKSKELVKPGMLGPFCLQSLCNDNLELVVFEMSARVDGGTNTFMNGSPYSCLYTGEPLSMGQRIAKEIKLALELGMIDKVLS.

His-27 and Ser-94 together coordinate 5-amino-1-(5-phospho-beta-D-ribosyl)imidazole-4-carboxamide. An ATP-grasp domain is found at 116 to 348 (RAILRWEAER…MGQRIAKEIK (233 aa)). ATP-binding positions include 146-208 (PDDI…ANYC) and Glu-230. Asn-258 provides a ligand contact to 5-amino-1-(5-phospho-beta-D-ribosyl)imidazole-4-carboxamide. Gln-297 and Glu-310 together coordinate Mg(2+).

It belongs to the phosphohexose mutase family. Requires Mg(2+) as cofactor. The cofactor is Mn(2+).

The enzyme catalyses 5-amino-1-(5-phospho-beta-D-ribosyl)imidazole-4-carboxamide + formate + ATP = 5-formamido-1-(5-phospho-D-ribosyl)imidazole-4-carboxamide + ADP + phosphate. It functions in the pathway purine metabolism; IMP biosynthesis via de novo pathway; 5-formamido-1-(5-phospho-D-ribosyl)imidazole-4-carboxamide from 5-amino-1-(5-phospho-D-ribosyl)imidazole-4-carboxamide (formate route): step 1/1. Catalyzes the ATP- and formate-dependent formylation of 5-aminoimidazole-4-carboxamide-1-beta-d-ribofuranosyl 5'-monophosphate (AICAR) to 5-formaminoimidazole-4-carboxamide-1-beta-d-ribofuranosyl 5'-monophosphate (FAICAR) in the absence of folates. This Methanococcus maripaludis (strain C5 / ATCC BAA-1333) protein is 5-formaminoimidazole-4-carboxamide-1-(beta)-D-ribofuranosyl 5'-monophosphate synthetase.